We begin with the raw amino-acid sequence, 520 residues long: Bifunctional purine biosynthesis protein PurH (520 aa).

Residues 1-150 (MSDDRKAIKR…KNHPSVAVVV (150 aa)) form the MGS-like domain.

The protein belongs to the PurH family.

It catalyses the reaction (6R)-10-formyltetrahydrofolate + 5-amino-1-(5-phospho-beta-D-ribosyl)imidazole-4-carboxamide = 5-formamido-1-(5-phospho-D-ribosyl)imidazole-4-carboxamide + (6S)-5,6,7,8-tetrahydrofolate. The catalysed reaction is IMP + H2O = 5-formamido-1-(5-phospho-D-ribosyl)imidazole-4-carboxamide. Its pathway is purine metabolism; IMP biosynthesis via de novo pathway; 5-formamido-1-(5-phospho-D-ribosyl)imidazole-4-carboxamide from 5-amino-1-(5-phospho-D-ribosyl)imidazole-4-carboxamide (10-formyl THF route): step 1/1. The protein operates within purine metabolism; IMP biosynthesis via de novo pathway; IMP from 5-formamido-1-(5-phospho-D-ribosyl)imidazole-4-carboxamide: step 1/1. The chain is Bifunctional purine biosynthesis protein PurH from Corynebacterium glutamicum (strain R).